We begin with the raw amino-acid sequence, 255 residues long: MRILCTNDDGIHAPGLKVVEEIARALSDDVWVVAPELDQSGVSHSLSLNDPLRLREVGPRHFAVRGTPTDCVIMGARHILGTKPPDLVLSGVNKGRNVAEDVVYSGTIAGALEGTILGLPSFALSQEFSVETRERPPWDTARTFGPDILRKVMAAGIPKETVINVNFPSCAPEDVLGIRVTRQGKRNLGFLRIDERRDGRNNPYFWIGFERAAMMDTPAEGTDLAALRERYVSVTPLRLDRTNEAFSEALGAALK.

Residues Asp-8, Asp-9, Ser-40, and Asn-93 each coordinate a divalent metal cation.

Belongs to the SurE nucleotidase family. Requires a divalent metal cation as cofactor.

Its subcellular location is the cytoplasm. The catalysed reaction is a ribonucleoside 5'-phosphate + H2O = a ribonucleoside + phosphate. Nucleotidase that shows phosphatase activity on nucleoside 5'-monophosphates. The protein is 5'-nucleotidase SurE of Bradyrhizobium diazoefficiens (strain JCM 10833 / BCRC 13528 / IAM 13628 / NBRC 14792 / USDA 110).